A 333-amino-acid polypeptide reads, in one-letter code: Ribosomal RNA small subunit methyltransferase H (333 aa).

Residues 43 to 45 (GGH), D62, Y89, D110, and Q117 contribute to the S-adenosyl-L-methionine site. Residues 312–333 (RLRAARRIRTTPTRPSPRRRRP) form a disordered region.

Belongs to the methyltransferase superfamily. RsmH family.

It localises to the cytoplasm. It carries out the reaction cytidine(1402) in 16S rRNA + S-adenosyl-L-methionine = N(4)-methylcytidine(1402) in 16S rRNA + S-adenosyl-L-homocysteine + H(+). Specifically methylates the N4 position of cytidine in position 1402 (C1402) of 16S rRNA. This is Ribosomal RNA small subunit methyltransferase H from Beutenbergia cavernae (strain ATCC BAA-8 / DSM 12333 / CCUG 43141 / JCM 11478 / NBRC 16432 / NCIMB 13614 / HKI 0122).